The following is a 154-amino-acid chain: Keratin-associated protein 9-9 (154 aa).

14 repeat units span residues 8-12, 13-17, 18-22, 37-41, 42-46, 51-55, 56-60, 61-65, 66-70, 75-79, 124-128, 129-133, 134-137, and 148-152. Residues 8 to 152 are 14 X 5 AA repeats of C-C-[RQVGE]-[SPSTNQ]-[TASL]; it reads CCQPTCCRTT…TCVSSCCQPS (145 aa).

It belongs to the KRTAP type 9 family. As to quaternary structure, interacts with hair keratins.

Functionally, in the hair cortex, hair keratin intermediate filaments are embedded in an interfilamentous matrix, consisting of hair keratin-associated proteins (KRTAP), which are essential for the formation of a rigid and resistant hair shaft through their extensive disulfide bond cross-linking with abundant cysteine residues of hair keratins. The matrix proteins include the high-sulfur and high-glycine-tyrosine keratins. This chain is Keratin-associated protein 9-9 (KRTAP9-9), found in Homo sapiens (Human).